Consider the following 302-residue polypeptide: Sulfate adenylyltransferase subunit 2 (302 aa).

It belongs to the PAPS reductase family. CysD subfamily. Heterodimer composed of CysD, the smaller subunit, and CysN.

The enzyme catalyses sulfate + ATP + H(+) = adenosine 5'-phosphosulfate + diphosphate. It participates in sulfur metabolism; hydrogen sulfide biosynthesis; sulfite from sulfate: step 1/3. Functionally, with CysN forms the ATP sulfurylase (ATPS) that catalyzes the adenylation of sulfate producing adenosine 5'-phosphosulfate (APS) and diphosphate, the first enzymatic step in sulfur assimilation pathway. APS synthesis involves the formation of a high-energy phosphoric-sulfuric acid anhydride bond driven by GTP hydrolysis by CysN coupled to ATP hydrolysis by CysD. This Shigella boydii serotype 4 (strain Sb227) protein is Sulfate adenylyltransferase subunit 2.